We begin with the raw amino-acid sequence, 812 residues long: Collagen-like protein 5 (812 aa).

Asparagine 13 and asparagine 83 each carry an N-linked (GlcNAc...) asparagine; by host glycan. 3 Collagen-like domains span residues 69-128 (GASG…KGDD), 143-502 (GEKG…KGDN), and 506-565 (GETG…KGEA). The segment at 71 to 568 (SGAQGVKGDP…PGIKGEAGTN (498 aa)) is disordered. Basic and acidic residues-rich tracts occupy residues 88–112 (TKGE…EKGD), 121–435 (SKGD…ETGS), 444–523 (SKGD…KGIK), and 531–561 (VKGD…DPGI). The N-linked (GlcNAc...) asparagine; by host glycan is linked to asparagine 502. N-linked (GlcNAc...) asparagine; by host glycans are attached at residues asparagine 637, asparagine 658, and asparagine 667. The segment at 730 to 802 (GQARTNGAST…VSASGGRGGD (73 aa)) is disordered. Gly residues predominate over residues 752–765 (FGGGGGGASGFAKG).

In terms of processing, may be hydroxylated on lysine by the viral-encoded procollagen-lysine,2-oxoglutarate 5-dioxygenase.

It is found in the virion. Functionally, may participate in the formation of a layer of cross-linked glycosylated fibrils at the viral surface thus giving it a hairy-like appearance. The polypeptide is Collagen-like protein 5 (Acanthamoeba polyphaga (Amoeba)).